A 488-amino-acid chain; its full sequence is 3-octaprenyl-4-hydroxybenzoate carboxy-lyase (488 aa).

Position 172 (N172) interacts with Mn(2+). Residues 175–177, 189–191, and 194–195 contribute to the prenylated FMN site; these read IYR, RWL, and RG. E238 contacts Mn(2+). Residue D287 is the Proton donor of the active site.

The protein belongs to the UbiD family. As to quaternary structure, homohexamer. The cofactor is prenylated FMN. Requires Mn(2+) as cofactor.

It localises to the cell membrane. It catalyses the reaction a 4-hydroxy-3-(all-trans-polyprenyl)benzoate + H(+) = a 2-(all-trans-polyprenyl)phenol + CO2. It functions in the pathway cofactor biosynthesis; ubiquinone biosynthesis. Catalyzes the decarboxylation of 3-octaprenyl-4-hydroxy benzoate to 2-octaprenylphenol, an intermediate step in ubiquinone biosynthesis. The polypeptide is 3-octaprenyl-4-hydroxybenzoate carboxy-lyase (Alkalilimnicola ehrlichii (strain ATCC BAA-1101 / DSM 17681 / MLHE-1)).